Reading from the N-terminus, the 855-residue chain is MAEGGFTHNQQWIGPEEAEELLDFDIAVQMNEEGPLNPGVNPFRVPGITSQEKDDYCKILQTKLQELKNEVKEVKIEEGNAGKFRRARYLRYSDENVLSIVYLLIGYLRYLIDHRSLGSLRHDIDIETPQEEHYNNSEKGTTLNIKYGRRCCISTFIMYLILFAGVGIWLGARAQVVWRLPPLVVPVDDTEIIFWDCWAPEEPACQDFLGTMIYLKANVNISIQEGPTLGNWAREIWSTLFKKATRQCRRGRIWRRWNETITGPLGCANNTCYNISVVVPDYQCYVDRVDTWLQGKVNISLCLTGGKMLYNKETRQLSYCTDPLQIPLINYTFGPNQTCMWNTSLIKDSEIPKCGWWNQVAYYDTCKWEEANVTFQCHRTQSQSGSWIRTISSWKQRNRWEWRPDFESEKVKISLQCNSTKNLTFAMRSSSDYYDVQGAWIEFGCHRNKSKRHSEARFRIRCKWNEGNNISLIDTCGTNPNVTGANPVDCTMKANTMYNCSLQDSFTMKIEDLIVHFNMTKAVELYNIAGNWSCTSDLPKGWGYMNCNCTNGTDNSETKMACPKNQGILRNWYNPVAGLRQALIKYQVVKQPEYLIVPEEVMQYKFKQKRAAIHIMLALATVLSMAGAGTGATAIGMVTQYHQVLATHQQALEKITEALKINNLRLITLEHQVLVIGLRVEAIEKFLYTAFAMQELGCNQNQFFCKIPPSLWSMYNMTLNQTIWNHGNISLGNWYNQTRDLQNKFYEIIMDIEQNNVQGKTGIQQLQKWENWVGWIGKIPQYLKGLLGSVLGIGLGILLLLICLPTLVDCIRNCTNKILGYTVIAMPEIDDEEVHLSVELRRNGRQCGISEKEEE.

Topologically, residues Met-1–Lys-784 are extracellular. N-linked (GlcNAc...) asparagine; by host glycans are attached at residues Asn-135, Asn-220, Asn-258, Asn-269, Asn-274, Asn-298, Asn-330, Asn-336, Asn-342, Asn-372, Asn-418, Asn-422, Asn-448, Asn-469, Asn-481, Asn-499, Asn-518, Asn-531, Asn-548, and Asn-551. A fusion peptide region spans residues Ile-615–Ile-635. The stretch at His-642–Ala-692 forms a coiled coil. An immunosuppression region spans residues Ile-661–Arg-679. Residues Asn-716, Asn-720, Asn-728, and Asn-736 are each glycosylated (N-linked (GlcNAc...) asparagine; by host). Positions Tyr-735–Asn-771 form a coiled coil. Residues Gly-785–Pro-805 traverse the membrane as a helical segment. Topologically, residues Thr-806–Glu-855 are cytoplasmic.

As to quaternary structure, the mature envelope protein (Env) consists of a trimer of SU-TM heterodimers attached by noncovalent interactions or by a labile interchain disulfide bond. Specific enzymatic cleavages in vivo yield mature proteins. Envelope glycoproteins are synthesized as an inactive precursor that is N-glycosylated and processed likely by host cell furin or by a furin-like protease in the Golgi to yield the mature SU and TM proteins. The cleavage site between SU and TM requires the minimal sequence [KR]-X-[KR]-R.

Its subcellular location is the virion membrane. The protein localises to the host cell membrane. The surface protein (SU) attaches the virus to the host cell by binding to its receptor. This interaction triggers the refolding of the transmembrane protein (TM) and is thought to activate its fusogenic potential by unmasking its fusion peptide. Fusion occurs at the host cell plasma membrane. Functionally, the transmembrane protein (TM) acts as a class I viral fusion protein. Under the current model, the protein has at least 3 conformational states: pre-fusion native state, pre-hairpin intermediate state, and post-fusion hairpin state. During viral and target cell membrane fusion, the coiled coil regions (heptad repeats) assume a trimer-of-hairpins structure, positioning the fusion peptide in close proximity to the C-terminal region of the ectodomain. The formation of this structure appears to drive apposition and subsequent fusion of viral and target cell membranes. Membranes fusion leads to delivery of the nucleocapsid into the cytoplasm. In Feline immunodeficiency virus (isolate TM2) (FIV), this protein is Envelope glycoprotein gp150 (env).